The sequence spans 234 residues: Probable Ufm1-specific protease 1 (234 aa).

Active-site residues include Cys-70, Asp-194, and His-196.

Belongs to the peptidase C78 family.

Thiol protease which recognizes and hydrolyzes the peptide bond at the C-terminal Gly of UFM1, a ubiquitin-like modifier protein bound to a number of target proteins. The polypeptide is Probable Ufm1-specific protease 1 (Drosophila melanogaster (Fruit fly)).